The chain runs to 247 residues: MAGHSKWANTKHRKAAQDAKRGKIFTKIIRELVTAARLGGGDPGANPRLRAAIDKALSNNMTRDTLNRAIARGVGGDEDNNMETIIYEGYGPGGTAVMVECLSDNRNRTVSEVRHAFTKTGGNLGTDGSVSYLFTKKGVISYAPGLEEDTVMDAALEAGADDIVVYDDGAIDVFTAWESLGAVKDALDATGLVAEGAEVSLIPSTKAELDAETAPKLLRLIDMLEDSDDVQEVYHNGEISDEVAATL.

The protein belongs to the TACO1 family.

It localises to the cytoplasm. This Yersinia pestis protein is Probable transcriptional regulatory protein YPO2055/y2255/YP_1898.